The sequence spans 598 residues: Aspartate--tRNA(Asp/Asn) ligase (598 aa).

L-aspartate is bound at residue E174. The aspartate stretch occupies residues 198-201 (QQLK). L-aspartate is bound at residue R220. ATP-binding positions include 220–222 (RDE) and Q229. L-aspartate is bound at residue H458. E492 contributes to the ATP binding site. L-aspartate is bound at residue R499. An ATP-binding site is contributed by 544–547 (GIDR).

This sequence belongs to the class-II aminoacyl-tRNA synthetase family. Type 1 subfamily. Homodimer.

The protein localises to the cytoplasm. It catalyses the reaction tRNA(Asx) + L-aspartate + ATP = L-aspartyl-tRNA(Asx) + AMP + diphosphate. Its function is as follows. Aspartyl-tRNA synthetase with relaxed tRNA specificity since it is able to aspartylate not only its cognate tRNA(Asp) but also tRNA(Asn). Reaction proceeds in two steps: L-aspartate is first activated by ATP to form Asp-AMP and then transferred to the acceptor end of tRNA(Asp/Asn). This chain is Aspartate--tRNA(Asp/Asn) ligase, found in Dehalococcoides mccartyi (strain ATCC BAA-2100 / JCM 16839 / KCTC 5957 / BAV1).